The primary structure comprises 915 residues: MAEIEENTVFEINDFTIVTDMEHFGAAFEGILQKYEFSSRRPCLSNDVKYRLIVTDTNMISIGENKLRIELLQPVPASSNPSNDVEFVEAPKDEIEEDAHVIPFTVAEEVANLKHGFEVTDSFLLKFGIRECIIISPNDSSGTFTDENQVNTVMGNIKTILHSSRCEVPVFCYIKDQSLDMISGYASDGNSTYNFSSVVLRNINRRHCSMTDLLYLFKEHLGASISAFHEEVRMSSRFTHVVPLKQSKYFRNHTVETFGLLATGPTSSLPFDILEIAATWRFFRENSLTENHSHSDFDINYSSYWNIKMKSTKSSLLGVLDEILGVYREDTRKAIRSDLNCALILGKHYTQKELPNAFQKLTINSASEVKIGKHAETEDSGTNGPMPPALMKSWVNFIFNEAESDNESLAHELNMLNAASMSENQLSDDELVNNVKLDTLFNYKNPKSANTFLAPYKCAKKSTVTWRLAIALANARVFMSDQPRAEPQLWVEFLLKLREKYEKMETVEKVYNGIDHLQCSFSQKMQMLQLCIDARQKRHRMLDSAHSANNSDEFFDANESFNAETILEPNNEGRLKLFGLNLVEIPDVPMYIPVTQDACPLTDEMIDARNEHLFSLDEEDRVHLQMELVKSDMQSFKAANAGAVFADFLRWHSPKDYDEKTNTISERMLISNNVWVRSWEAALPIPVANQARIFNDTKIAEEILEIFNNATLDQVREWMKPTVFAATLERLTEIESSYGVSEEKQKQRTKTAKILANATLNNTPMDYNEISKYCSQIEMIHNMKVHLMQLFENAREKMHPPYPSETDVQSAIKQLVNIAVHNLWDNSTDEEPTFVIKPQDPIGRAIAVIGKLDELTEQQLINGHRKEYIFNWKHSCPSTTTIPMTHRMYADLRSDKHSLYFSMANDCNFSNSSYL.

Belongs to the Rab3-GAP catalytic subunit family. In terms of assembly, the Rab3 GTPase-activating complex is a heterodimer composed of rbg-1 and rbg-2.

It localises to the cytoplasm. Its function is as follows. Probable catalytic subunit of a GTPase activating protein that has specificity for Rab3 subfamily. Rab3 proteins are involved in regulated exocytosis of neurotransmitters and hormones. Specifically converts active Rab3-GTP to the inactive form Rab3-GDP. The protein is Rab3 GTPase-activating protein catalytic subunit (rbg-1) of Caenorhabditis elegans.